A 324-amino-acid chain; its full sequence is MELPADGSALARQGSIYSLTFDEFQSALGSAEKDFGSMNMDELLRNIWTAEESQAIAPAAAAASAAAVVGDAQQQQQPIQRQGSLTLPRTLSQKTVDEVWRDIMGLGGSDDEDPAAAAAAAAPAQRQPTLGEMTLEEFLVRAGVVREDMGQTIVLPPQAQALFPGSNVVAPAMQLANGMLPGVVGVAPGAAAAMTVAAPATPVVLNGLGKVEGGDLSSLSPVPYPFDTALRVRKGPTVEKVVERRQRRMIKNRESAARSRARKQAYIMELEAEVAKLKEQKAELQKKQVEMIQKQNDEVMERITQQLGPKAKRFCLRRTLTGPC.

The tract at residues 106–127 is disordered; that stretch reads LGGSDDEDPAAAAAAAAPAQRQ. Over residues 115 to 124 the composition is skewed to low complexity; it reads AAAAAAAAPA. A bZIP domain is found at 242–287; the sequence is VERRQRRMIKNRESAARSRARKQAYIMELEAEVAKLKEQKAELQKK. The interval 244 to 263 is basic motif; sequence RRQRRMIKNRESAARSRARK. The segment at 270-284 is leucine-zipper; that stretch reads LEAEVAKLKEQKAEL.

As to quaternary structure, interacts with MODD. Interacts with SAPK2, SAPK6 and SAPK9. In terms of processing, phosphorylated on serine and threonine residues by SAPK2, SAPK6 and SAPK9. Phosphorylation is required for full transactivation activity. As to expression, expressed in roots, shoots, leaves, flag leaves, stems, flowers and panicles. Widely expressed.

Its subcellular location is the nucleus. Its function is as follows. Transcription factor involved in abscisic acid (ABA) signaling pathway. Transcription factor activity is fully activated by ABA. Acts as a positive regulator of the expression of abiotic stress-responsive genes through an ABA-dependent signaling pathway. Acts as a positive regulator of ABA signaling and drought stress tolerance. Plays an important role in ABA and auxin responses. Involved in ABA signaling and stress responses by directly binding to the ABA-responsive element (ABRE)-containing genes, especially WRKY family genes. Modulates response to auxin. Suppresses auxin signaling by targeting ABRE-containing genes related to auxin metabolism or signaling. The sequence is that of bZIP transcription factor 46 from Oryza sativa subsp. japonica (Rice).